A 499-amino-acid chain; its full sequence is Cytochrome P450 monooxygenase notH' (499 aa).

The helical transmembrane segment at 11 to 31 (LGLEPAGWALALLTSSIIYLF) threads the bilayer. N296 and N427 each carry an N-linked (GlcNAc...) asparagine glycan. C440 lines the heme pocket.

This sequence belongs to the cytochrome P450 family. Heme is required as a cofactor.

The protein resides in the membrane. It participates in alkaloid biosynthesis. Functionally, cytochrome P450 monooxygenase; part of the gene cluster that mediates the biosynthesis of notoamide, a fungal indole alkaloid that belongs to a family of natural products containing a characteristic bicyclo[2.2.2]diazaoctane core. The first step of notoamide biosynthesis involves coupling of L-proline and L-tryptophan by the bimodular NRPS notE', to produce cyclo-L-tryptophan-L-proline called brevianamide F. The reverse prenyltransferase notF' then acts as a deoxybrevianamide E synthase and converts brevianamide F to deoxybrevianamide E via reverse prenylation at C-2 of the indole ring leading to the bicyclo[2.2.2]diazaoctane core. Deoxybrevianamide E is further hydroxylated at C-6 of the indole ring, likely catalyzed by the cytochrome P450 monooxygenase notG', to yield 6-hydroxy-deoxybrevianamide E. 6-hydroxy-deoxybrevianamide E is a specific substrate of the prenyltransferase notC' for normal prenylation at C-7 to produce 6-hydroxy-7-prenyl-deoxybrevianamide, also called notoamide S. As the proposed pivotal branching point in notoamide biosynthesis, notoamide S can be diverted to notoamide E through an oxidative pyran ring closure putatively catalyzed by either notH' cytochrome P450 monooxygenase or the notD' FAD-linked oxidoreductase. This step would be followed by an indole 2,3-epoxidation-initiated pinacol-like rearrangement catalyzed by the notB' FAD-dependent monooxygenase leading to the formation of notoamide C and notoamide D. On the other hand notoamide S is converted to notoamide T by notH' (or notD'), a bifunctional oxidase that also functions as the intramolecular Diels-Alderase responsible for generation of (-)-notoamide T. To generate antipodal (+)-notoaminide T, notH (or notD) in Aspergillus strain MF297-2 is expected to catalyze a Diels-Alder reaction leading to the opposite stereochemistry. The remaining oxidoreductase notD' (or notH') likely catalyzes the oxidative pyran ring formation to yield (-)-stephacidin A. The FAD-dependent monooxygenase notI' is highly similar to notB' and is predicted to catalyze a similar conversion from (-)-stephacidin A to (+)-notoamide B via the 2,3-epoxidation of (-)-stephacidin A followed by a pinacol-type rearrangement. Finally, it remains unclear which enzyme could be responsible for the final hydroxylation steps leading to notoamide A and sclerotiamide. This Aspergillus versicolor protein is Cytochrome P450 monooxygenase notH'.